The primary structure comprises 349 residues: 2-oxoglutarate-Fe(II) type oxidoreductase hxnY (349 aa).

One can recognise a Fe2OG dioxygenase domain in the interval 178-282; that stretch reads GVATMRMLHY…RYSIPFFFSG (105 aa). Residues histidine 205, aspartate 207, and histidine 263 each coordinate Fe cation. A 2-oxoglutarate-binding site is contributed by arginine 273.

It belongs to the iron/ascorbate-dependent oxidoreductase family. Fe(2+) is required as a cofactor.

2-oxoglutarate-Fe(II) type oxidoreductase, part of the hnx cluster involved in the purine degradation. The nicotinate hydroxylase hnxS accepts nicotinate as a substrate and catalyzes the first step of nicotinate catabolism. The major facilitator-type transporters hxnP and hxnZ are probably involved in the uptake of nicotinate-derived metabolites, and the oxidoreductases hxnT and hxnY in the further metabolism of 6-OH nicotinic acid. This chain is 2-oxoglutarate-Fe(II) type oxidoreductase hxnY, found in Emericella nidulans (strain FGSC A4 / ATCC 38163 / CBS 112.46 / NRRL 194 / M139) (Aspergillus nidulans).